A 928-amino-acid chain; its full sequence is DENN domain-containing protein 2C (928 aa).

2 disordered regions span residues 67–105 (KSKN…YDDT) and 245–266 (QSSL…IRGR). Residues 85–105 (ENTKSHDQSENENKKHEYDDT) are compositionally biased toward basic and acidic residues. A Phosphoserine modification is found at serine 271. A disordered region spans residues 428–456 (KLHSYTGKELPPTKGETSGNESDAEYLPK). Residues 492–641 (ELFVVVSLQK…PFPAPGRTIT (150 aa)) form the uDENN domain. Positions 663-796 (RLEHVDFKCL…LQAALMQILE (134 aa)) constitute a cDENN domain. The dDENN domain maps to 798-888 (RNEILTQEQN…QDRELRKSGV (91 aa)).

Its function is as follows. Guanine nucleotide exchange factor (GEF) which may activate RAB9A and RAB9B. Promotes the exchange of GDP to GTP, converting inactive GDP-bound Rab proteins into their active GTP-bound form. In Homo sapiens (Human), this protein is DENN domain-containing protein 2C (DENND2C).